Reading from the N-terminus, the 471-residue chain is Glutamate--tRNA ligase 1 (471 aa).

The short motif at 15 to 25 (PSPTGYLHIGG) is the 'HIGH' region element. The short motif at 243–247 (KLSKR) is the 'KMSKS' region element. Lys-246 serves as a coordination point for ATP.

It belongs to the class-I aminoacyl-tRNA synthetase family. Glutamate--tRNA ligase type 1 subfamily. As to quaternary structure, monomer.

The protein localises to the cytoplasm. The catalysed reaction is tRNA(Glu) + L-glutamate + ATP = L-glutamyl-tRNA(Glu) + AMP + diphosphate. Catalyzes the attachment of glutamate to tRNA(Glu) in a two-step reaction: glutamate is first activated by ATP to form Glu-AMP and then transferred to the acceptor end of tRNA(Glu). The sequence is that of Glutamate--tRNA ligase 1 from Dinoroseobacter shibae (strain DSM 16493 / NCIMB 14021 / DFL 12).